A 278-amino-acid chain; its full sequence is Small ribosomal subunit protein uS3 (278 aa).

Positions 39-107 constitute a KH type-2 domain; that stretch reads LRKAIAKKYV…KVQLNIVEIS (69 aa). Positions 244 to 278 are disordered; that stretch reads AKPKRVTKKAEAEASAEEKPKRAAKKAENITKEEE. The segment covering 251 to 278 has biased composition (basic and acidic residues); sequence KKAEAEASAEEKPKRAAKKAENITKEEE.

The protein belongs to the universal ribosomal protein uS3 family. Part of the 30S ribosomal subunit. Forms a tight complex with proteins S10 and S14.

Its function is as follows. Binds the lower part of the 30S subunit head. Binds mRNA in the 70S ribosome, positioning it for translation. The sequence is that of Small ribosomal subunit protein uS3 from Dehalococcoides mccartyi (strain ATCC BAA-2266 / KCTC 15142 / 195) (Dehalococcoides ethenogenes (strain 195)).